Reading from the N-terminus, the 588-residue chain is Adenine deaminase (588 aa).

This sequence belongs to the metallo-dependent hydrolases superfamily. Adenine deaminase family. In terms of assembly, homodimer. Requires Mn(2+) as cofactor.

The catalysed reaction is adenine + H2O + H(+) = hypoxanthine + NH4(+). The sequence is that of Adenine deaminase from Shigella flexneri.